An 859-amino-acid polypeptide reads, in one-letter code: Leucine--tRNA ligase (859 aa).

The 'HIGH' region signature appears at 42 to 52; it reads PYPSGRLHMGH. The short motif at 618–622 is the 'KMSKS' region element; that stretch reads KMSKS. Lysine 621 lines the ATP pocket.

This sequence belongs to the class-I aminoacyl-tRNA synthetase family.

The protein resides in the cytoplasm. The enzyme catalyses tRNA(Leu) + L-leucine + ATP = L-leucyl-tRNA(Leu) + AMP + diphosphate. This is Leucine--tRNA ligase from Shewanella baltica (strain OS155 / ATCC BAA-1091).